The following is a 23-amino-acid chain: Dahlein-4.2 (23 aa).

As to expression, expressed by the skin dorsal glands.

The protein resides in the secreted. Its function is as follows. Has no antimicrobial activity. This Ranoidea dahlii (Dahl's aquatic frog) protein is Dahlein-4.2.